A 91-amino-acid chain; its full sequence is Small ribosomal subunit protein bS20 (91 aa).

Residues 1–21 show a composition bias toward basic and acidic residues; sequence MPLHKSAEKRLRQAARRNERN. A disordered region spans residues 1 to 24; it reads MPLHKSAEKRLRQAARRNERNRAR.

This sequence belongs to the bacterial ribosomal protein bS20 family.

Binds directly to 16S ribosomal RNA. The protein is Small ribosomal subunit protein bS20 of Chlorobaculum parvum (strain DSM 263 / NCIMB 8327) (Chlorobium vibrioforme subsp. thiosulfatophilum).